A 65-amino-acid polypeptide reads, in one-letter code: Large ribosomal subunit protein bL35 (65 aa).

Belongs to the bacterial ribosomal protein bL35 family.

This is Large ribosomal subunit protein bL35 from Heliobacterium modesticaldum (strain ATCC 51547 / Ice1).